Here is a 161-residue protein sequence, read N- to C-terminus: Epididymal protein 13 (161 aa).

Positions 1–23 are cleaved as a signal peptide; the sequence is MHRSEPFLKMSLLILLFLGLAEA. An N-linked (GlcNAc...) asparagine glycan is attached at N56.

Its subcellular location is the secreted. The sequence is that of Epididymal protein 13 from Homo sapiens (Human).